The sequence spans 103 residues: Putative membrane protein insertion efficiency factor (103 aa).

The interval 68–103 is disordered; it reads HEGGYDPVPLAKQDAKPENNSESESLLNQPTETKSL. Polar residues predominate over residues 87–103; that stretch reads NSESESLLNQPTETKSL.

This sequence belongs to the UPF0161 family.

Its subcellular location is the cell inner membrane. In terms of biological role, could be involved in insertion of integral membrane proteins into the membrane. The sequence is that of Putative membrane protein insertion efficiency factor from Idiomarina loihiensis (strain ATCC BAA-735 / DSM 15497 / L2-TR).